Here is a 64-residue protein sequence, read N- to C-terminus: Thrombin-like enzyme collinein-4 (64 aa).

Disulfide bonds link Cys-5–Cys-23 and Cys-34–Cys-51.

In terms of assembly, monomer. As to expression, expressed by the vanom gland.

The protein localises to the secreted. Thrombin-like snake venom serine protease. In Crotalus durissus collilineatus (Brazilian rattlesnake), this protein is Thrombin-like enzyme collinein-4.